A 582-amino-acid polypeptide reads, in one-letter code: Phosphoribosylaminoimidazole carboxylase (582 aa).

The ATP-grasp domain maps to 114-305; that stretch reads KKYLAERGVA…QFENHLRAIL (192 aa). ATP is bound at residue 143–200; it reads AGRLGLPLMLKAKTLAYDGRGNSPLKSASSGDIQASLKFLGDRPLYAEGWAPFVKEVA.

In the C-terminal section; belongs to the AIR carboxylase family. Class I subfamily.

It catalyses the reaction 5-amino-1-(5-phospho-D-ribosyl)imidazole-4-carboxylate + H(+) = 5-amino-1-(5-phospho-beta-D-ribosyl)imidazole + CO2. It functions in the pathway purine metabolism; IMP biosynthesis via de novo pathway; 5-amino-1-(5-phospho-D-ribosyl)imidazole-4-carboxylate from 5-amino-1-(5-phospho-D-ribosyl)imidazole (carboxylase route): step 1/1. In Cryptococcus neoformans var. neoformans serotype D (strain JEC21 / ATCC MYA-565) (Filobasidiella neoformans), this protein is Phosphoribosylaminoimidazole carboxylase (ADE2).